Reading from the N-terminus, the 122-residue chain is Large ribosomal subunit protein uL14 (122 aa).

It belongs to the universal ribosomal protein uL14 family. Part of the 50S ribosomal subunit. Forms a cluster with proteins L3 and L19. In the 70S ribosome, L14 and L19 interact and together make contacts with the 16S rRNA in bridges B5 and B8.

In terms of biological role, binds to 23S rRNA. Forms part of two intersubunit bridges in the 70S ribosome. In Thermotoga petrophila (strain ATCC BAA-488 / DSM 13995 / JCM 10881 / RKU-1), this protein is Large ribosomal subunit protein uL14.